Reading from the N-terminus, the 384-residue chain is uncharacterized protein (384 aa).

This sequence to S.pombe SpAC2E11.17.

This is an uncharacterized protein from Schizosaccharomyces pombe (strain 972 / ATCC 24843) (Fission yeast).